Here is a 124-residue protein sequence, read N- to C-terminus: Fluoride-specific ion channel FluC 1 (124 aa).

A run of 4 helical transmembrane segments spans residues methionine 1–aspartate 21, alanine 30–leucine 50, alanine 56–threonine 76, and isoleucine 102–leucine 122. Residues glycine 73 and threonine 76 each contribute to the Na(+) site.

Belongs to the fluoride channel Fluc/FEX (TC 1.A.43) family.

The protein localises to the cell membrane. It catalyses the reaction fluoride(in) = fluoride(out). With respect to regulation, na(+) is not transported, but it plays an essential structural role and its presence is essential for fluoride channel function. Functionally, fluoride-specific ion channel. Important for reducing fluoride concentration in the cell, thus reducing its toxicity. In Streptomyces avermitilis (strain ATCC 31267 / DSM 46492 / JCM 5070 / NBRC 14893 / NCIMB 12804 / NRRL 8165 / MA-4680), this protein is Fluoride-specific ion channel FluC 1.